Reading from the N-terminus, the 251-residue chain is Hydroxyacylglutathione hydrolase (251 aa).

Positions 53, 55, 57, 58, 110, 127, and 165 each coordinate Zn(2+).

It belongs to the metallo-beta-lactamase superfamily. Glyoxalase II family. Monomer. Requires Zn(2+) as cofactor.

It carries out the reaction an S-(2-hydroxyacyl)glutathione + H2O = a 2-hydroxy carboxylate + glutathione + H(+). It functions in the pathway secondary metabolite metabolism; methylglyoxal degradation; (R)-lactate from methylglyoxal: step 2/2. Functionally, thiolesterase that catalyzes the hydrolysis of S-D-lactoyl-glutathione to form glutathione and D-lactic acid. This Escherichia coli (strain ATCC 8739 / DSM 1576 / NBRC 3972 / NCIMB 8545 / WDCM 00012 / Crooks) protein is Hydroxyacylglutathione hydrolase.